The following is a 222-amino-acid chain: Phosphoribosylformylglycinamidine synthase subunit PurQ (222 aa).

Positions S2–K222 constitute a Glutamine amidotransferase type-1 domain. C86 serves as the catalytic Nucleophile. Catalysis depends on residues H194 and E196.

In terms of assembly, part of the FGAM synthase complex composed of 1 PurL, 1 PurQ and 2 PurS subunits.

It is found in the cytoplasm. It carries out the reaction N(2)-formyl-N(1)-(5-phospho-beta-D-ribosyl)glycinamide + L-glutamine + ATP + H2O = 2-formamido-N(1)-(5-O-phospho-beta-D-ribosyl)acetamidine + L-glutamate + ADP + phosphate + H(+). The catalysed reaction is L-glutamine + H2O = L-glutamate + NH4(+). The protein operates within purine metabolism; IMP biosynthesis via de novo pathway; 5-amino-1-(5-phospho-D-ribosyl)imidazole from N(2)-formyl-N(1)-(5-phospho-D-ribosyl)glycinamide: step 1/2. Functionally, part of the phosphoribosylformylglycinamidine synthase complex involved in the purines biosynthetic pathway. Catalyzes the ATP-dependent conversion of formylglycinamide ribonucleotide (FGAR) and glutamine to yield formylglycinamidine ribonucleotide (FGAM) and glutamate. The FGAM synthase complex is composed of three subunits. PurQ produces an ammonia molecule by converting glutamine to glutamate. PurL transfers the ammonia molecule to FGAR to form FGAM in an ATP-dependent manner. PurS interacts with PurQ and PurL and is thought to assist in the transfer of the ammonia molecule from PurQ to PurL. The chain is Phosphoribosylformylglycinamidine synthase subunit PurQ from Helicobacter hepaticus (strain ATCC 51449 / 3B1).